The primary structure comprises 512 residues: AMP phosphorylase (512 aa).

Residues G166, 192–197 (SRAITG), and T201 each bind AMP. The active-site Proton donor is D254. Positions 262 and 286 each coordinate AMP.

Belongs to the thymidine/pyrimidine-nucleoside phosphorylase family. Type 2 subfamily.

The enzyme catalyses AMP + phosphate = alpha-D-ribose 1,5-bisphosphate + adenine. The catalysed reaction is CMP + phosphate = cytosine + alpha-D-ribose 1,5-bisphosphate. It catalyses the reaction UMP + phosphate = alpha-D-ribose 1,5-bisphosphate + uracil. Its function is as follows. Catalyzes the conversion of AMP and phosphate to adenine and ribose 1,5-bisphosphate (R15P). Exhibits phosphorylase activity toward CMP and UMP in addition to AMP. Functions in an archaeal AMP degradation pathway, together with R15P isomerase and RubisCO. In Methanothrix thermoacetophila (strain DSM 6194 / JCM 14653 / NBRC 101360 / PT) (Methanosaeta thermophila), this protein is AMP phosphorylase.